Here is a 381-residue protein sequence, read N- to C-terminus: Cytochrome b (381 aa).

4 helical membrane passes run 34–54 (FGSL…FLAM), 78–99 (WLIR…YIHI), 114–134 (WNIG…GYVL), and 179–199 (FFAF…IHVL). 2 residues coordinate heme b: H84 and H98. Residues H183 and H197 each coordinate heme b. An a ubiquinone-binding site is contributed by H202. 4 helical membrane-spanning segments follow: residues 227–247 (YKDA…ALFL), 289–309 (LGGV…PLLH), 321–341 (LTQV…WIGG), and 348–368 (FILI…IAMP).

It belongs to the cytochrome b family. As to quaternary structure, the cytochrome bc1 complex contains 3 respiratory subunits (MT-CYB, CYC1 and UQCRFS1), 2 core proteins (UQCRC1 and UQCRC2) and probably 6 low-molecular weight proteins. The cofactor is heme b.

It localises to the mitochondrion inner membrane. Component of the ubiquinol-cytochrome c reductase complex (complex III or cytochrome b-c1 complex) that is part of the mitochondrial respiratory chain. The b-c1 complex mediates electron transfer from ubiquinol to cytochrome c. Contributes to the generation of a proton gradient across the mitochondrial membrane that is then used for ATP synthesis. This Isurus paucus (Longfin mako shark) protein is Cytochrome b (mt-cyb).